Reading from the N-terminus, the 321-residue chain is MATH domain and coiled-coil domain-containing protein At3g58410 (321 aa).

One can recognise an MATH domain in the interval 6-128 (GKKFAWVIKN…NGELMIVAEV (123 aa)). Residues 255–310 (KVDWLEKKLDQVRDKKEKERSCLAKLQETEETLLKLKQKCTELDALMDTEKAELSA) adopt a coiled-coil conformation.

The sequence is that of MATH domain and coiled-coil domain-containing protein At3g58410 from Arabidopsis thaliana (Mouse-ear cress).